We begin with the raw amino-acid sequence, 622 residues long: SLAIN motif-containing protein-like (622 aa).

The stretch at 34–60 forms a coiled coil; sequence DLKEVQKLHELVKRLEIQNQQLKIKRN. Disordered regions lie at residues 404-441 and 473-622; these read HRYS…IQNH and VRSS…DGCY. Low complexity predominate over residues 405–415; the sequence is RYSPSPLSSPR. 4 stretches are compositionally biased toward polar residues: residues 416–430, 484–502, 525–591, and 599–611; these read CQSP…TTSR, QGPS…STPP, VSTS…STVP, and SRRS…MNST.

The protein belongs to the SLAIN motif-containing family.

This chain is SLAIN motif-containing protein-like, found in Xenopus tropicalis (Western clawed frog).